The primary structure comprises 137 residues: Large ribosomal subunit protein uL13 (137 aa).

It belongs to the universal ribosomal protein uL13 family. Part of the 50S ribosomal subunit.

This protein is one of the early assembly proteins of the 50S ribosomal subunit, although it is not seen to bind rRNA by itself. It is important during the early stages of 50S assembly. The protein is Large ribosomal subunit protein uL13 of Methanocaldococcus jannaschii (strain ATCC 43067 / DSM 2661 / JAL-1 / JCM 10045 / NBRC 100440) (Methanococcus jannaschii).